The primary structure comprises 318 residues: Aspartate carbamoyltransferase catalytic subunit (318 aa).

Carbamoyl phosphate-binding residues include Arg-59 and Thr-60. Lys-87 contributes to the L-aspartate binding site. Carbamoyl phosphate contacts are provided by Arg-109, His-137, and Gln-140. L-aspartate is bound by residues Arg-170 and Arg-224. Gly-265 and Pro-266 together coordinate carbamoyl phosphate.

The protein belongs to the aspartate/ornithine carbamoyltransferase superfamily. ATCase family. As to quaternary structure, heterododecamer (2C3:3R2) of six catalytic PyrB chains organized as two trimers (C3), and six regulatory PyrI chains organized as three dimers (R2).

It catalyses the reaction carbamoyl phosphate + L-aspartate = N-carbamoyl-L-aspartate + phosphate + H(+). It participates in pyrimidine metabolism; UMP biosynthesis via de novo pathway; (S)-dihydroorotate from bicarbonate: step 2/3. Functionally, catalyzes the condensation of carbamoyl phosphate and aspartate to form carbamoyl aspartate and inorganic phosphate, the committed step in the de novo pyrimidine nucleotide biosynthesis pathway. This is Aspartate carbamoyltransferase catalytic subunit from Rhizobium etli (strain CIAT 652).